The following is a 431-amino-acid chain: Serine--tRNA ligase (431 aa).

Residues 41–66 (QSRTQELQAERNARSKSIGEAARRGE) are disordered. 240–242 (TSE) lines the L-serine pocket. 271–273 (RSE) is a binding site for ATP. Glutamate 294 contributes to the L-serine binding site. 358 to 361 (EISS) is a binding site for ATP. Serine 392 provides a ligand contact to L-serine.

It belongs to the class-II aminoacyl-tRNA synthetase family. Type-1 seryl-tRNA synthetase subfamily. In terms of assembly, homodimer. The tRNA molecule binds across the dimer.

Its subcellular location is the cytoplasm. It catalyses the reaction tRNA(Ser) + L-serine + ATP = L-seryl-tRNA(Ser) + AMP + diphosphate + H(+). The enzyme catalyses tRNA(Sec) + L-serine + ATP = L-seryl-tRNA(Sec) + AMP + diphosphate + H(+). It participates in aminoacyl-tRNA biosynthesis; selenocysteinyl-tRNA(Sec) biosynthesis; L-seryl-tRNA(Sec) from L-serine and tRNA(Sec): step 1/1. In terms of biological role, catalyzes the attachment of serine to tRNA(Ser). Is also able to aminoacylate tRNA(Sec) with serine, to form the misacylated tRNA L-seryl-tRNA(Sec), which will be further converted into selenocysteinyl-tRNA(Sec). The protein is Serine--tRNA ligase of Aeromonas hydrophila subsp. hydrophila (strain ATCC 7966 / DSM 30187 / BCRC 13018 / CCUG 14551 / JCM 1027 / KCTC 2358 / NCIMB 9240 / NCTC 8049).